The primary structure comprises 98 residues: Small ribosomal subunit protein bS6 (98 aa).

The protein belongs to the bacterial ribosomal protein bS6 family.

In terms of biological role, binds together with bS18 to 16S ribosomal RNA. The polypeptide is Small ribosomal subunit protein bS6 (Lactobacillus acidophilus (strain ATCC 700396 / NCK56 / N2 / NCFM)).